The following is a 338-amino-acid chain: 3-keto-steroid reductase erg27 (338 aa).

Residues Leu-16, Thr-44, Lys-50, and Asp-75 each contribute to the NADP(+) site. Active-site proton donor residues include Ser-180 and Tyr-203. 3 residues coordinate NADP(+): Tyr-203, Lys-207, and Thr-236. Lys-207 acts as the Lowers pKa of active site Tyr in catalysis.

The protein belongs to the short-chain dehydrogenases/reductases (SDR) family. ERG27 subfamily. In terms of assembly, heterotetramer of erg25, erg26, erg27 and erg28. Erg28 acts as a scaffold to tether erg27 and other 4,4-demethylation-related enzymes, forming a demethylation enzyme complex, in the endoplasmic reticulum.

It catalyses the reaction 3-dehydro-4alpha-methylzymosterol + NADPH + H(+) = 4alpha-methylzymosterol + NADP(+). The protein operates within steroid biosynthesis; zymosterol biosynthesis; zymosterol from lanosterol: step 5/6. It functions in the pathway steroid metabolism; ergosterol biosynthesis. 3-keto-steroid reductase; part of the third module of ergosterol biosynthesis pathway that includes by the late steps of the pathway. Erg27 is a catalytic component of the C-4 demethylation complex that catalyze the reduction of the keto group on the C-3. The third module or late pathway involves the ergosterol synthesis itself through consecutive reactions that mainly occur in the endoplasmic reticulum (ER) membrane. Firstly, the squalene synthase erg9 catalyzes the condensation of 2 farnesyl pyrophosphate moieties to form squalene, which is the precursor of all steroids. Secondly, squalene is converted into lanosterol by the consecutive action of the squalene epoxidase erg1 and the lanosterol synthase erg7. The lanosterol 14-alpha-demethylase erg11/cyp1 catalyzes C14-demethylation of lanosterol to produce 4,4'-dimethyl cholesta-8,14,24-triene-3-beta-ol. In the next steps, a complex process involving various demethylation, reduction and desaturation reactions catalyzed by the C-14 reductase erg24 and the C-4 demethylation complex erg25-erg26-erg27 leads to the production of zymosterol. Erg28 likely functions in the C-4 demethylation complex reaction by tethering erg26 and Erg27 to the endoplasmic reticulum or to facilitate interaction between these proteins. Then, the sterol 24-C-methyltransferase erg6 catalyzes the methyl transfer from S-adenosyl-methionine to the C-24 of zymosterol to form fecosterol. The C-8 sterol isomerase erg2 catalyzes the reaction which results in unsaturation at C-7 in the B ring of sterols and thus converts fecosterol to episterol. The sterol-C5-desaturases erg31 and erg32 then catalyze the introduction of a C-5 double bond in the B ring to produce 5-dehydroepisterol. The C-22 sterol desaturase erg5 further converts 5-dehydroepisterol into ergosta-5,7,22,24(28)-tetraen-3beta-ol by forming the C-22(23) double bond in the sterol side chain. Finally, ergosta-5,7,22,24(28)-tetraen-3beta-ol is substrate of the C-24(28) sterol reductase erg4 to produce ergosterol. In the genus Schizosaccharomyces, a second route exists between lanosterol and fecosterol, via the methylation of lanosterol to eburicol by erg6, followed by C14-demethylation by erg11/cyp1 and C4-demethylation by the demethylation complex erg25-erg26-erg27. The chain is 3-keto-steroid reductase erg27 from Schizosaccharomyces pombe (strain 972 / ATCC 24843) (Fission yeast).